The primary structure comprises 374 residues: Ribosomal RNA large subunit methyltransferase G (374 aa).

This sequence belongs to the methyltransferase superfamily. RlmG family.

The protein localises to the cytoplasm. The catalysed reaction is guanosine(1835) in 23S rRNA + S-adenosyl-L-methionine = N(2)-methylguanosine(1835) in 23S rRNA + S-adenosyl-L-homocysteine + H(+). Specifically methylates the guanine in position 1835 (m2G1835) of 23S rRNA. In Ectopseudomonas mendocina (strain ymp) (Pseudomonas mendocina), this protein is Ribosomal RNA large subunit methyltransferase G.